A 67-amino-acid polypeptide reads, in one-letter code: DNA-directed RNA polymerase subunit omega (67 aa).

The protein belongs to the RNA polymerase subunit omega family. As to quaternary structure, the RNAP catalytic core consists of 2 alpha, 1 beta, 1 beta' and 1 omega subunit. When a sigma factor is associated with the core the holoenzyme is formed, which can initiate transcription.

It catalyses the reaction RNA(n) + a ribonucleoside 5'-triphosphate = RNA(n+1) + diphosphate. Its function is as follows. Promotes RNA polymerase assembly. Latches the N- and C-terminal regions of the beta' subunit thereby facilitating its interaction with the beta and alpha subunits. This chain is DNA-directed RNA polymerase subunit omega, found in Listeria innocua serovar 6a (strain ATCC BAA-680 / CLIP 11262).